The chain runs to 305 residues: tRNA pseudouridine synthase B (305 aa).

Residue aspartate 39 is the Nucleophile of the active site.

The protein belongs to the pseudouridine synthase TruB family. Type 1 subfamily.

It carries out the reaction uridine(55) in tRNA = pseudouridine(55) in tRNA. Responsible for synthesis of pseudouridine from uracil-55 in the psi GC loop of transfer RNAs. The sequence is that of tRNA pseudouridine synthase B from Staphylococcus aureus (strain MRSA252).